The chain runs to 812 residues: Probable inorganic carbon transporter subunit DabA (812 aa).

Zn(2+)-binding residues include Cys337, Asp339, His499, and Cys514.

It belongs to the inorganic carbon transporter (TC 9.A.2) DabA family. In terms of assembly, forms a complex with DabB. Zn(2+) serves as cofactor.

It localises to the cell inner membrane. Part of an energy-coupled inorganic carbon pump. In Xanthomonas oryzae pv. oryzae (strain KACC10331 / KXO85), this protein is Probable inorganic carbon transporter subunit DabA.